A 164-amino-acid chain; its full sequence is V-type proton ATPase subunit c' (164 aa).

Residues methionine 1 to proline 15 lie on the Lumenal side of the membrane. Residues phenylalanine 16–glycine 36 form a helical membrane-spanning segment. At threonine 37 to serine 58 the chain is on the cytoplasmic side. Residues leucine 59–valine 79 traverse the membrane as a helical segment. Topologically, residues alanine 80–histidine 97 are lumenal. A helical transmembrane segment spans residues leucine 98–valine 118. At glycine 119–glycine 135 the chain is on the cytoplasmic side. The chain crosses the membrane as a helical span at residues isoleucine 136 to isoleucine 156. Residues leucine 157–asparagine 164 are Lumenal-facing.

It belongs to the V-ATPase proteolipid subunit family. In terms of assembly, V-ATPase is a heteromultimeric enzyme composed of a peripheral catalytic V1 complex (components A to H) attached to an integral membrane V0 proton pore complex (components: a, c, c', c'', d, e, f and VOA1). The decameric c-ring forms the proton-conducting pore, and is composed of eight proteolipid subunits c, one subunit c' and one subunit c''.

The protein localises to the vacuole membrane. In terms of biological role, proton-conducting pore forming subunit of the V0 complex of vacuolar(H+)-ATPase (V-ATPase), a multisubunit enzyme composed of a peripheral complex (V1) that hydrolyzes ATP and a membrane integral complex (V0) that translocates protons. V-ATPase is responsible for acidifying and maintaining the pH of intracellular compartments. The chain is V-type proton ATPase subunit c' (VMA11) from Eremothecium gossypii (strain ATCC 10895 / CBS 109.51 / FGSC 9923 / NRRL Y-1056) (Yeast).